A 424-amino-acid polypeptide reads, in one-letter code: Gamma-glutamyl phosphate reductase (424 aa).

The protein belongs to the gamma-glutamyl phosphate reductase family.

Its subcellular location is the cytoplasm. It carries out the reaction L-glutamate 5-semialdehyde + phosphate + NADP(+) = L-glutamyl 5-phosphate + NADPH + H(+). It participates in amino-acid biosynthesis; L-proline biosynthesis; L-glutamate 5-semialdehyde from L-glutamate: step 2/2. Functionally, catalyzes the NADPH-dependent reduction of L-glutamate 5-phosphate into L-glutamate 5-semialdehyde and phosphate. The product spontaneously undergoes cyclization to form 1-pyrroline-5-carboxylate. In Dehalococcoides mccartyi (strain ATCC BAA-2100 / JCM 16839 / KCTC 5957 / BAV1), this protein is Gamma-glutamyl phosphate reductase.